We begin with the raw amino-acid sequence, 292 residues long: Acetylglutamate kinase (292 aa).

Substrate is bound by residues 64-65 (GG), Arg-86, and Asn-190.

It belongs to the acetylglutamate kinase family. ArgB subfamily.

The protein resides in the cytoplasm. The enzyme catalyses N-acetyl-L-glutamate + ATP = N-acetyl-L-glutamyl 5-phosphate + ADP. Its pathway is amino-acid biosynthesis; L-arginine biosynthesis; N(2)-acetyl-L-ornithine from L-glutamate: step 2/4. Its function is as follows. Catalyzes the ATP-dependent phosphorylation of N-acetyl-L-glutamate. The sequence is that of Acetylglutamate kinase from Geobacter metallireducens (strain ATCC 53774 / DSM 7210 / GS-15).